Here is a 98-residue protein sequence, read N- to C-terminus: Thrombin-like enzyme cerastotin (98 aa).

A Peptidase S1 domain is found at 1–98; sequence VIGGAECNIN…IKKPVNGSTH (98 aa). Residues H41 and D85 each act as charge relay system in the active site. N-linked (GlcNAc...) asparagine glycosylation occurs at N94.

The protein belongs to the peptidase S1 family. Snake venom subfamily. In terms of assembly, monomer. Expressed by the venom gland.

It localises to the secreted. Inhibited by PMSF. Thrombin-like snake venom serine protease that preferentially cleaves the alpha-chain of fibrinogen (FGA). Induce platelet aggregation in the presence of exogenous fibrinogen. Possesses esterase and amidolytic activities. In Cerastes cerastes (Horned desert viper), this protein is Thrombin-like enzyme cerastotin.